The primary structure comprises 153 residues: ATP synthase subunit b' (153 aa).

A helical membrane pass occupies residues 23–40 (LMAIQVVALTYILNSLFF).

This sequence belongs to the ATPase B chain family. In terms of assembly, F-type ATPases have 2 components, F(1) - the catalytic core - and F(0) - the membrane proton channel. F(1) has five subunits: alpha(3), beta(3), gamma(1), delta(1), epsilon(1). F(0) has four main subunits: a(1), b(1), b'(1) and c(10-14). The alpha and beta chains form an alternating ring which encloses part of the gamma chain. F(1) is attached to F(0) by a central stalk formed by the gamma and epsilon chains, while a peripheral stalk is formed by the delta, b and b' chains.

It localises to the cellular thylakoid membrane. In terms of biological role, f(1)F(0) ATP synthase produces ATP from ADP in the presence of a proton or sodium gradient. F-type ATPases consist of two structural domains, F(1) containing the extramembraneous catalytic core and F(0) containing the membrane proton channel, linked together by a central stalk and a peripheral stalk. During catalysis, ATP synthesis in the catalytic domain of F(1) is coupled via a rotary mechanism of the central stalk subunits to proton translocation. Component of the F(0) channel, it forms part of the peripheral stalk, linking F(1) to F(0). The b'-subunit is a diverged and duplicated form of b found in plants and photosynthetic bacteria. The chain is ATP synthase subunit b' from Prochlorococcus marinus (strain MIT 9301).